The primary structure comprises 862 residues: Interleukin-12 receptor subunit beta-2 (862 aa).

A signal peptide spans 1–23 (MAHTFRGCSLAFMFIITWLLIKA). Over 24 to 622 (KIDACKRGDV…REFCLQGKAN (599 aa)) the chain is Extracellular. N-linked (GlcNAc...) asparagine glycosylation is found at Asn48, Asn129, Asn166, Asn195, and Asn271. 5 Fibronectin type-III domains span residues 126–221 (QPQN…FLDI), 226–319 (PPWD…TPEE), 320–419 (EPTG…LCEA), 423–520 (APRQ…KHKA), and 521–620 (PLSG…LQGK). Residues 305-309 (WSDWS) carry the WSXWS motif motif. 3 N-linked (GlcNAc...) asparagine glycosylation sites follow: Asn347, Asn376, and Asn480. The helical transmembrane segment at 623–643 (WMAFVAPSICIAIIMVGIFST) threads the bilayer. The Cytoplasmic segment spans residues 644–862 (HYFQQKVFVL…LKMRCDSLML (219 aa)). The Box 1 motif signature appears at 662–670 (CSREIPDPA). A disordered region spans residues 725-755 (NWPQREKGIQGHQASEKDMMHSASSPPPPRA). Basic and acidic residues predominate over residues 728-744 (QREKGIQGHQASEKDMM). The segment at 796-801 (THDGYL) is required for STAT4 binding. At Tyr800 the chain carries Phosphotyrosine.

The protein belongs to the type I cytokine receptor family. Type 2 subfamily. In terms of assembly, heterodimer/heterooligomer; disulfide-linked. The functional high affinity IL12 receptor is composed of I12RB1 and IL12RB2. Il12RB2 binds JAK2 (via its N-terminal) through a membrane-proximal region of the cytoplasmic domain. Interaction, in vitro and in vivo, with SOCS3 (via its SH2 domain) inhibits the STAT4-mediated activation. Binds STAT4 through a membrane-distal C-terminal region. On IL12 binding, phosphorylated on C-terminal tyrosine residues by JAK2. Phosphorylation on Tyr-800 is required for STAT4 binding and activation, and for SOCS3 binding. As to expression, isoform 2 is expressed at similar levels in both naive and activated T-cells.

Its subcellular location is the membrane. Receptor for interleukin-12. This subunit is the signaling component coupling to the JAK2/STAT4 pathway. Promotes the proliferation of T-cells as well as NK cells. Induces the promotion of T-cells towards the Th1 phenotype by strongly enhancing IFN-gamma production. In Homo sapiens (Human), this protein is Interleukin-12 receptor subunit beta-2 (IL12RB2).